Here is a 320-residue protein sequence, read N- to C-terminus: Cytochrome f (320 aa).

Residues 1–35 (MQNRNTFLGVKEQITRSIFVSIMIYVITRASISNA) form the signal peptide. The heme site is built by Tyr36, Cys56, Cys59, and His60. The chain crosses the membrane as a helical span at residues 286–306 (IQGLLFFLASVILAQIFLVLK).

It belongs to the cytochrome f family. As to quaternary structure, the 4 large subunits of the cytochrome b6-f complex are cytochrome b6, subunit IV (17 kDa polypeptide, petD), cytochrome f and the Rieske protein, while the 4 small subunits are PetG, PetL, PetM and PetN. The complex functions as a dimer. Requires heme as cofactor.

Its subcellular location is the plastid. It localises to the chloroplast thylakoid membrane. In terms of biological role, component of the cytochrome b6-f complex, which mediates electron transfer between photosystem II (PSII) and photosystem I (PSI), cyclic electron flow around PSI, and state transitions. The polypeptide is Cytochrome f (Dioscorea elephantipes (Elephant's foot yam)).